The sequence spans 690 residues: Eukaryotic translation initiation factor 3 subunit B (690 aa).

A compositionally biased stretch (basic and acidic residues) spans 1–11; the sequence is MAKKKSEEHSG. Residues 1 to 36 form a disordered region; sequence MAKKKSEEHSGADANDSDYQEEPNFEDPPGFVDNIS. Over residues 15 to 25 the composition is skewed to acidic residues; sequence NDSDYQEEPNF. Residues 57–141 form the RRM domain; the sequence is SVVVVDNIPK…HTFAVNLFTD (85 aa). WD repeat units lie at residues 207–246, 293–331, 334–369, 442–484, and 530–575; these read TRER…KIQK, DGMS…LLDL, IKIP…TLME, EIRE…KPSL, and PDHF…IKRT. The stretch at 595–645 forms a coiled coil; the sequence is EEKQKEIKKNLKKYYAAFEQKDRLRLTRASKELLEKRSQLRETFMEYRNKR.

The protein belongs to the eIF-3 subunit B family. Component of the eukaryotic translation initiation factor 3 (eIF-3) complex. The eIF-3 complex interacts with pix. Interacts with mxt.

Its subcellular location is the cytoplasm. Functionally, RNA-binding component of the eukaryotic translation initiation factor 3 (eIF-3) complex, which is involved in protein synthesis of a specialized repertoire of mRNAs and, together with other initiation factors, stimulates binding of mRNA and methionyl-tRNAi to the 40S ribosome. The eIF-3 complex specifically targets and initiates translation of a subset of mRNAs involved in cell proliferation. In Drosophila simulans (Fruit fly), this protein is Eukaryotic translation initiation factor 3 subunit B.